A 185-amino-acid polypeptide reads, in one-letter code: ATP synthase subunit b 2 (185 aa).

The tract at residues 1-24 is disordered; it reads MADSHGNAKGATAHTEAGGGHKAP. Residues 34–56 form a helical membrane-spanning segment; that stretch reads ASQLVSLTIAFVALYLISSRLAL.

This sequence belongs to the ATPase B chain family. F-type ATPases have 2 components, F(1) - the catalytic core - and F(0) - the membrane proton channel. F(1) has five subunits: alpha(3), beta(3), gamma(1), delta(1), epsilon(1). F(0) has three main subunits: a(1), b(2) and c(10-14). The alpha and beta chains form an alternating ring which encloses part of the gamma chain. F(1) is attached to F(0) by a central stalk formed by the gamma and epsilon chains, while a peripheral stalk is formed by the delta and b chains.

It is found in the cell inner membrane. Functionally, f(1)F(0) ATP synthase produces ATP from ADP in the presence of a proton or sodium gradient. F-type ATPases consist of two structural domains, F(1) containing the extramembraneous catalytic core and F(0) containing the membrane proton channel, linked together by a central stalk and a peripheral stalk. During catalysis, ATP synthesis in the catalytic domain of F(1) is coupled via a rotary mechanism of the central stalk subunits to proton translocation. Component of the F(0) channel, it forms part of the peripheral stalk, linking F(1) to F(0). The b'-subunit is a diverged and duplicated form of b found in plants and photosynthetic bacteria. This Nitrobacter hamburgensis (strain DSM 10229 / NCIMB 13809 / X14) protein is ATP synthase subunit b 2 (atpF2).